A 138-amino-acid polypeptide reads, in one-letter code: Putative esterase HI_1161 (138 aa).

It belongs to the thioesterase PaaI family.

This Haemophilus influenzae (strain ATCC 51907 / DSM 11121 / KW20 / Rd) protein is Putative esterase HI_1161.